A 313-amino-acid chain; its full sequence is Ribosomal RNA small subunit methyltransferase H (313 aa).

S-adenosyl-L-methionine-binding positions include 35–37 (GGH), D55, F80, D102, and Q109.

The protein belongs to the methyltransferase superfamily. RsmH family.

Its subcellular location is the cytoplasm. The catalysed reaction is cytidine(1402) in 16S rRNA + S-adenosyl-L-methionine = N(4)-methylcytidine(1402) in 16S rRNA + S-adenosyl-L-homocysteine + H(+). Functionally, specifically methylates the N4 position of cytidine in position 1402 (C1402) of 16S rRNA. The sequence is that of Ribosomal RNA small subunit methyltransferase H from Shewanella woodyi (strain ATCC 51908 / MS32).